Consider the following 273-residue polypeptide: uncharacterized protein (273 aa).

Residues 7–27 (LTLGICLVLLIILIVGYVIMT) traverse the membrane as a helical segment.

This sequence belongs to the staphylococcal tandem lipoprotein family.

Its subcellular location is the cell membrane. This is an uncharacterized protein from Staphylococcus aureus (strain MSSA476).